A 352-amino-acid polypeptide reads, in one-letter code: MRKIIHVDMDCFFAAVEMRDNPALRDVPIAIGGSRVKRGVISTANYPARKFGVRSAMPTAMALKLCPHLILLPGRFDAYKEASVRIQEIFSRYTSLIEPLSLDEAYLDVTDSLHCHGSATLMAQEIRQTISDELNLTASAGIAPVKFLAKIASDLNKPNGQYVITPDEVPHFLKTLPLSKIPGVGKVSAAKLENLGLRTCEDVQKSDLAMLLKRFGKFGRVLWERSQGIDERSINNERLRKSVGVERTLADDIHDWSDCETIITEQLYPELERRLAKVKPDLLIARQGVKLKFNDFQQTTQEHVWPKLNKDDLIATAKKTWQERRAGRGVRLVGLHVTLLDPQLERQLVLGL.

The UmuC domain occupies 4 to 185 (IIHVDMDCFF…LPLSKIPGVG (182 aa)). Mg(2+)-binding residues include Asp8 and Asp103. Glu104 is a catalytic residue.

It belongs to the DNA polymerase type-Y family. Monomer. The cofactor is Mg(2+).

It is found in the cytoplasm. It carries out the reaction DNA(n) + a 2'-deoxyribonucleoside 5'-triphosphate = DNA(n+1) + diphosphate. Its function is as follows. Poorly processive, error-prone DNA polymerase involved in untargeted mutagenesis. Copies undamaged DNA at stalled replication forks, which arise in vivo from mismatched or misaligned primer ends. These misaligned primers can be extended by PolIV. Exhibits no 3'-5' exonuclease (proofreading) activity. May be involved in translesional synthesis, in conjunction with the beta clamp from PolIII. This chain is DNA polymerase IV, found in Enterobacter sp. (strain 638).